We begin with the raw amino-acid sequence, 234 residues long: UPF0173 metal-dependent hydrolase RHE_CH01853 (234 aa).

The protein belongs to the UPF0173 family.

The protein is UPF0173 metal-dependent hydrolase RHE_CH01853 of Rhizobium etli (strain ATCC 51251 / DSM 11541 / JCM 21823 / NBRC 15573 / CFN 42).